A 45-amino-acid polypeptide reads, in one-letter code: Large ribosomal subunit protein bL34 (45 aa).

Residues 1–45 (MTKRTFGGTSRKRKRVSGFRVRMRSHTGRRVIRTRRKRGRSRLAA) form a disordered region. A compositionally biased stretch (basic residues) spans 10–45 (SRKRKRVSGFRVRMRSHTGRRVIRTRRKRGRSRLAA).

It belongs to the bacterial ribosomal protein bL34 family.

This chain is Large ribosomal subunit protein bL34, found in Synechococcus sp. (strain CC9311).